A 154-amino-acid chain; its full sequence is Protein-export protein SecB (154 aa).

This sequence belongs to the SecB family. Homotetramer, a dimer of dimers. One homotetramer interacts with 1 SecA dimer.

The protein localises to the cytoplasm. One of the proteins required for the normal export of preproteins out of the cell cytoplasm. It is a molecular chaperone that binds to a subset of precursor proteins, maintaining them in a translocation-competent state. It also specifically binds to its receptor SecA. The protein is Protein-export protein SecB of Vibrio parahaemolyticus serotype O3:K6 (strain RIMD 2210633).